We begin with the raw amino-acid sequence, 81 residues long: Photosystem I iron-sulfur center (81 aa).

2 consecutive 4Fe-4S ferredoxin-type domains span residues 2–31 and 39–68; these read SHSVKIYDTCIGCTQCVRACPTDVLEMIPW and IASAPRTEDCVGCKRCESACPTDFLSVRVY. [4Fe-4S] cluster is bound by residues Cys11, Cys14, Cys17, Cys21, Cys48, Cys51, Cys54, and Cys58.

In terms of assembly, the eukaryotic PSI reaction center is composed of at least 11 subunits. The cofactor is [4Fe-4S] cluster.

It localises to the plastid. It is found in the chloroplast thylakoid membrane. The enzyme catalyses reduced [plastocyanin] + hnu + oxidized [2Fe-2S]-[ferredoxin] = oxidized [plastocyanin] + reduced [2Fe-2S]-[ferredoxin]. Its function is as follows. Apoprotein for the two 4Fe-4S centers FA and FB of photosystem I (PSI); essential for photochemical activity. FB is the terminal electron acceptor of PSI, donating electrons to ferredoxin. The C-terminus interacts with PsaA/B/D and helps assemble the protein into the PSI complex. Required for binding of PsaD and PsaE to PSI. PSI is a plastocyanin-ferredoxin oxidoreductase, converting photonic excitation into a charge separation, which transfers an electron from the donor P700 chlorophyll pair to the spectroscopically characterized acceptors A0, A1, FX, FA and FB in turn. The sequence is that of Photosystem I iron-sulfur center from Sorghum bicolor (Sorghum).